The chain runs to 285 residues: Pantothenate synthetase (285 aa).

30-37 (MGNLHDGH) contacts ATP. The active-site Proton donor is histidine 37. Glutamine 61 serves as a coordination point for (R)-pantoate. Glutamine 61 is a binding site for beta-alanine. 149–152 (GEKD) contributes to the ATP binding site. Glutamine 155 is a (R)-pantoate binding site. Residues isoleucine 178 and 186 to 189 (FSSR) each bind ATP.

The protein belongs to the pantothenate synthetase family. Homodimer.

It is found in the cytoplasm. The enzyme catalyses (R)-pantoate + beta-alanine + ATP = (R)-pantothenate + AMP + diphosphate + H(+). The protein operates within cofactor biosynthesis; (R)-pantothenate biosynthesis; (R)-pantothenate from (R)-pantoate and beta-alanine: step 1/1. In terms of biological role, catalyzes the condensation of pantoate with beta-alanine in an ATP-dependent reaction via a pantoyl-adenylate intermediate. This is Pantothenate synthetase from Buchnera aphidicola subsp. Schizaphis graminum (strain Sg).